The sequence spans 163 residues: Ribosome maturation factor RimM (163 aa).

A PRC barrel domain is found at 90-161 (EGRHYWGDLE…VVVDPPEGLL (72 aa)).

Belongs to the RimM family. In terms of assembly, binds ribosomal protein uS19.

Its subcellular location is the cytoplasm. An accessory protein needed during the final step in the assembly of 30S ribosomal subunit, possibly for assembly of the head region. Essential for efficient processing of 16S rRNA. May be needed both before and after RbfA during the maturation of 16S rRNA. It has affinity for free ribosomal 30S subunits but not for 70S ribosomes. The chain is Ribosome maturation factor RimM from Anaeromyxobacter dehalogenans (strain 2CP-C).